Consider the following 853-residue polypeptide: DNA mismatch repair protein MutS (853 aa).

613-620 (GPNMGGKS) contributes to the ATP binding site.

It belongs to the DNA mismatch repair MutS family.

Its function is as follows. This protein is involved in the repair of mismatches in DNA. It is possible that it carries out the mismatch recognition step. This protein has a weak ATPase activity. The polypeptide is DNA mismatch repair protein MutS (Vibrio vulnificus (strain YJ016)).